The primary structure comprises 348 residues: MEMSFRWYGEDDPVTLENIGQIPTMKGIVTAIYDVPVGEVWSRERIQQLKEKVEAAGLKISVIESVPVHEDIKLGRPTRDLLIDNYIQTVKNLAAEGIDTICYNFMPVFDWTRTDLAYQYPDGSTALIFDETVSKKMDPVNGELSLPGWDASYSKEEMKAIMDAYAEIDEEKLWENLTYFIKRIIPEAEAVGVKMAIHPDDPPYSIFGLPRIITGLEAIERFVKLYDSKSNGITLCVGSYASDPQNDVLEISRRAFELDRVNFVHARNIKLGDGKSFKESAHPSEYGSIDMYEVIKLCHEFGFEGAIRPDHGRMIWGETGRPGYGLYDRALGATYVSGLYEAVIKGSK.

The protein belongs to the mannonate dehydratase family. Requires Fe(2+) as cofactor. Mn(2+) serves as cofactor.

It catalyses the reaction D-mannonate = 2-dehydro-3-deoxy-D-gluconate + H2O. It functions in the pathway carbohydrate metabolism; pentose and glucuronate interconversion. Functionally, catalyzes the dehydration of D-mannonate. This chain is Mannonate dehydratase, found in Streptococcus agalactiae serotype V (strain ATCC BAA-611 / 2603 V/R).